The primary structure comprises 424 residues: CinA-like protein (424 aa).

The protein belongs to the CinA family.

The sequence is that of CinA-like protein from Prochlorococcus marinus (strain AS9601).